A 546-amino-acid polypeptide reads, in one-letter code: Chaperonin GroEL (546 aa).

ATP-binding positions include 30–33 (TLGP), Lys51, 87–91 (DGTTT), Gly415, and Asp496. A disordered region spans residues 526–546 (PEPKSAPAGGMGGMGGMDGMM). Residues 534-546 (GGMGGMGGMDGMM) are compositionally biased toward gly residues.

This sequence belongs to the chaperonin (HSP60) family. In terms of assembly, forms a cylinder of 14 subunits composed of two heptameric rings stacked back-to-back. Interacts with the co-chaperonin GroES.

The protein localises to the cytoplasm. The enzyme catalyses ATP + H2O + a folded polypeptide = ADP + phosphate + an unfolded polypeptide.. In terms of biological role, together with its co-chaperonin GroES, plays an essential role in assisting protein folding. The GroEL-GroES system forms a nano-cage that allows encapsulation of the non-native substrate proteins and provides a physical environment optimized to promote and accelerate protein folding. The polypeptide is Chaperonin GroEL (Rhodopseudomonas palustris).